The primary structure comprises 1371 residues: Serine protease pic autotransporter (1371 aa).

A signal peptide spans 1 to 55; that stretch reads MNKVYSLKYCPVTGGLIVVSELASRVIKKTCRRLTHILLAGIPAVYLYYPQISQA. The region spanning 56–301 is the Peptidase S6 domain; the sequence is GIVRSDIAYQ…NVIPTDYLNQ (246 aa). Catalysis depends on charge relay system residues His127, Asp155, and Ser258. The Autotransporter domain occupies 1105 to 1371; sequence DTNGDAGAWA…AVNANFRYMF (267 aa).

Post-translationally, cleaved to release the mature protein from the outer membrane.

The protein resides in the periplasm. It localises to the secreted. The protein localises to the cell surface. Its subcellular location is the cell outer membrane. In terms of biological role, involved in virulence of uropathogenic E.coli although it is not known how it contributes to it. Has no mucinase activity. This Escherichia coli O6:H1 (strain CFT073 / ATCC 700928 / UPEC) protein is Serine protease pic autotransporter (pic).